Reading from the N-terminus, the 629-residue chain is tRNA uridine 5-carboxymethylaminomethyl modification enzyme MnmG (629 aa).

FAD contacts are provided by residues 15-20 (GAGHAG), V127, and S182. A disordered region spans residues 203–226 (TPPRVKSSTIDYSKTEEQPGDDHP). Over residues 215–226 (SKTEEQPGDDHP) the composition is skewed to basic and acidic residues. 274–288 (GARYCPSIEDKIVRF) serves as a coordination point for NAD(+). Residue Q371 coordinates FAD.

The protein belongs to the MnmG family. Homodimer. Heterotetramer of two MnmE and two MnmG subunits. The cofactor is FAD.

The protein localises to the cytoplasm. NAD-binding protein involved in the addition of a carboxymethylaminomethyl (cmnm) group at the wobble position (U34) of certain tRNAs, forming tRNA-cmnm(5)s(2)U34. In Listeria innocua serovar 6a (strain ATCC BAA-680 / CLIP 11262), this protein is tRNA uridine 5-carboxymethylaminomethyl modification enzyme MnmG.